Here is a 177-residue protein sequence, read N- to C-terminus: Large ribosomal subunit protein uL6 (177 aa).

This sequence belongs to the universal ribosomal protein uL6 family. In terms of assembly, part of the 50S ribosomal subunit.

In terms of biological role, this protein binds to the 23S rRNA, and is important in its secondary structure. It is located near the subunit interface in the base of the L7/L12 stalk, and near the tRNA binding site of the peptidyltransferase center. The sequence is that of Large ribosomal subunit protein uL6 from Bradyrhizobium sp. (strain ORS 278).